The primary structure comprises 260 residues: Imidazole glycerol phosphate synthase subunit HisF (260 aa).

Residues aspartate 11 and aspartate 130 contribute to the active site.

The protein belongs to the HisA/HisF family. Heterodimer of HisH and HisF.

It localises to the cytoplasm. It catalyses the reaction 5-[(5-phospho-1-deoxy-D-ribulos-1-ylimino)methylamino]-1-(5-phospho-beta-D-ribosyl)imidazole-4-carboxamide + L-glutamine = D-erythro-1-(imidazol-4-yl)glycerol 3-phosphate + 5-amino-1-(5-phospho-beta-D-ribosyl)imidazole-4-carboxamide + L-glutamate + H(+). The protein operates within amino-acid biosynthesis; L-histidine biosynthesis; L-histidine from 5-phospho-alpha-D-ribose 1-diphosphate: step 5/9. IGPS catalyzes the conversion of PRFAR and glutamine to IGP, AICAR and glutamate. The HisF subunit catalyzes the cyclization activity that produces IGP and AICAR from PRFAR using the ammonia provided by the HisH subunit. The sequence is that of Imidazole glycerol phosphate synthase subunit HisF from Psychrobacter cryohalolentis (strain ATCC BAA-1226 / DSM 17306 / VKM B-2378 / K5).